The following is a 448-amino-acid chain: DNA primase DnaG (448 aa).

The Toprim domain occupies 186–260 (DSIIVVEGRN…EADFVARAPP (75 aa)). Glu192, Asp234, and Asp236 together coordinate Mg(2+). Residues 318 to 340 (AEVIEEPPEQPPKNEEIREEQSQ) form a disordered region. Residues 329-338 (PKNEEIREEQ) show a composition bias toward basic and acidic residues.

Belongs to the archaeal DnaG primase family. As to quaternary structure, forms a ternary complex with MCM helicase and DNA. Component of the archaeal exosome complex. The cofactor is Mg(2+).

It carries out the reaction ssDNA + n NTP = ssDNA/pppN(pN)n-1 hybrid + (n-1) diphosphate.. Its function is as follows. RNA polymerase that catalyzes the synthesis of short RNA molecules used as primers for DNA polymerase during DNA replication. Also part of the exosome, which is a complex involved in RNA degradation. Acts as a poly(A)-binding protein that enhances the interaction between heteromeric, adenine-rich transcripts and the exosome. The protein is DNA primase DnaG of Thermoplasma acidophilum (strain ATCC 25905 / DSM 1728 / JCM 9062 / NBRC 15155 / AMRC-C165).